The chain runs to 345 residues: GTP 3',8-cyclase (345 aa).

The 227-residue stretch at 10 to 236 (SHGRPLGVLR…QCVSSHWPLD (227 aa)) folds into the Radical SAM core domain. R19 lines the GTP pocket. 2 residues coordinate [4Fe-4S] cluster: C26 and C30. Residue Y32 participates in S-adenosyl-L-methionine binding. C33 contacts [4Fe-4S] cluster. A GTP-binding site is contributed by R65. S-adenosyl-L-methionine is bound at residue G69. T98 provides a ligand contact to GTP. S123 is a binding site for S-adenosyl-L-methionine. A GTP-binding site is contributed by K172. M206 lines the S-adenosyl-L-methionine pocket. [4Fe-4S] cluster-binding residues include C269 and C272. 274–276 (RIR) is a GTP binding site. C286 serves as a coordination point for [4Fe-4S] cluster.

This sequence belongs to the radical SAM superfamily. MoaA family. In terms of assembly, monomer and homodimer. [4Fe-4S] cluster is required as a cofactor.

The catalysed reaction is GTP + AH2 + S-adenosyl-L-methionine = (8S)-3',8-cyclo-7,8-dihydroguanosine 5'-triphosphate + 5'-deoxyadenosine + L-methionine + A + H(+). It functions in the pathway cofactor biosynthesis; molybdopterin biosynthesis. Its function is as follows. Catalyzes the cyclization of GTP to (8S)-3',8-cyclo-7,8-dihydroguanosine 5'-triphosphate. This chain is GTP 3',8-cyclase, found in Synechococcus sp. (strain CC9902).